The sequence spans 174 residues: Endoribonuclease YbeY (174 aa).

Residues His-133, His-137, and His-143 each coordinate Zn(2+).

This sequence belongs to the endoribonuclease YbeY family. Zn(2+) serves as cofactor.

The protein localises to the cytoplasm. Its function is as follows. Single strand-specific metallo-endoribonuclease involved in late-stage 70S ribosome quality control and in maturation of the 3' terminus of the 16S rRNA. This Paracoccus denitrificans (strain Pd 1222) protein is Endoribonuclease YbeY.